The chain runs to 173 residues: Shikimate kinase (173 aa).

10–15 (GSGKTT) provides a ligand contact to ATP. Residue T14 coordinates Mg(2+). Residues D32, R56, and G78 each coordinate substrate. R117 lines the ATP pocket. Position 135 (R135) interacts with substrate.

It belongs to the shikimate kinase family. Monomer. The cofactor is Mg(2+).

It is found in the cytoplasm. It catalyses the reaction shikimate + ATP = 3-phosphoshikimate + ADP + H(+). Its pathway is metabolic intermediate biosynthesis; chorismate biosynthesis; chorismate from D-erythrose 4-phosphate and phosphoenolpyruvate: step 5/7. Functionally, catalyzes the specific phosphorylation of the 3-hydroxyl group of shikimic acid using ATP as a cosubstrate. This chain is Shikimate kinase, found in Limosilactobacillus fermentum (strain NBRC 3956 / LMG 18251) (Lactobacillus fermentum).